We begin with the raw amino-acid sequence, 594 residues long: Zinc finger protein 467 (594 aa).

Residues 1-70 form a disordered region; sequence MRETLEALNS…HTEQAEAPCM (70 aa). Residue K97 forms a Glycyl lysine isopeptide (Lys-Gly) (interchain with G-Cter in SUMO2) linkage. 12 C2H2-type zinc fingers span residues 160-182, 188-210, 216-238, 244-266, 272-294, 300-322, 355-377, 430-452, 458-480, 486-508, 514-536, and 542-564; these read YGCEECERRFRDQLTLRLHQRLH, CACPDCGRSFTQRAHMLLHQRSH, FPCSECDKRFSKKAHLTRHLRTH, YPCAECGKRFSQKIHLGSHQKTH, FPCTECEKRFRKKTHLIRHQRIH, YQCTQCTRSFTHKQHLVRHQRVH, FACSHCGQSFGWKKNLATHQSLH, FFCPDCGRGFAHGQHLARHRRVH, FACAQCGRRFGSRPNLVAHSRAH, FACAQCGRRFSRKSHLGRHQAVH, HACAVCARCFSSKTNLVRHQAIH, and FSCPQCAKSFSRKTHLVRHQRIH. Residues 313-350 are disordered; the sequence is QHLVRHQRVHDAASRTRSSPDIPATPHPPTASLAPSPT. K368 participates in a covalent cross-link: Glycyl lysine isopeptide (Lys-Gly) (interchain with G-Cter in SUMO2).

It belongs to the krueppel C2H2-type zinc-finger protein family. In terms of assembly, interacts with STAT3. Enhances STAT3 activity by keeping it in the nucleus.

The protein resides in the nucleus. Transcription factor that promotes adipocyte differentiation and suppresses osteoblast differentiation in the bone marrow. Enhances the osteoclast-supporting ability of stromal cells. Binds with STAT3 the consensus sequence 5'-CTTCTGGGAAGA-3' of the acute phase response element (APRE). Transactivates several promoters including FOS, OSM and PPARG. Recruits a histone deacetylase complex. The polypeptide is Zinc finger protein 467 (Znf467) (Rattus norvegicus (Rat)).